The primary structure comprises 514 residues: Multifunctional alkaline phosphatase superfamily protein pRL90232 (514 aa).

Mn(2+)-binding residues include aspartate 12, cysteine 57, aspartate 324, and histidine 325. Cysteine 57 (nucleophile) is an active-site residue. At cysteine 57 the chain carries 3-oxoalanine (Cys).

Belongs to the alkaline phosphatase superfamily. As to quaternary structure, homotetramer. Requires Mn(2+) as cofactor. The conversion to 3-oxoalanine (also known as C-formylglycine, FGly), of a serine or cysteine residue in prokaryotes and of a cysteine residue in eukaryotes, is critical for catalytic activity.

Functionally, hydrolytic enzyme with a broad substrate specificity acting on phosphate diesters and phosphonate monoesters. This Rhizobium johnstonii (strain DSM 114642 / LMG 32736 / 3841) (Rhizobium leguminosarum bv. viciae) protein is Multifunctional alkaline phosphatase superfamily protein pRL90232.